We begin with the raw amino-acid sequence, 355 residues long: Protein AMBP (355 aa).

Positions 55 and 138 each coordinate 3-hydroxy-L-kynurenine. Cys-92 and Cys-189 are oxidised to a cystine. Asn-145 carries N-linked (GlcNAc...) asparagine glycosylation. 3-hydroxy-L-kynurenine is bound at residue Lys-150. N-linked (GlcNAc...) asparagine glycans are attached at residues Asn-231 and Asn-255. Cystine bridges form between Cys-236/Cys-286, Cys-245/Cys-269, Cys-261/Cys-282, Cys-292/Cys-342, Cys-301/Cys-325, and Cys-317/Cys-338. BPTI/Kunitz inhibitor domains lie at 236–286 and 292–342; these read CKAA…LQRC and CRLP…QEYC.

The protein in the N-terminal section; belongs to the calycin superfamily. Lipocalin family. As to quaternary structure, I-alpha-I plasma protease inhibitors are assembled from one or two heavy chains (H1, H2 or H3) and one light chain, bikunin. Inter-alpha-inhibitor (I-alpha-I) is composed of H1, H2 and bikunin, inter-alpha-like inhibitor (I-alpha-LI) of H2 and bikunin, and pre-alpha-inhibitor (P-alpha-I) of H3 and bikunin. The precursor is proteolytically processed into two separately functioning proteins. Post-translationally, 3-hydroxykynurenine, an oxidized tryptophan metabolite that is common in biological fluids, reacts with Cys-55, Lys-138, and Lys-150 to form heterogeneous polycyclic chromophores including hydroxanthommatin. The reaction by alpha-1-microglobulin is autocatalytic. The chromophore can react with accessible cysteines forming non-reducible thioether cross-links with other molecules of alpha-1-microglobulin or with other proteins. As to expression, expressed by the liver and secreted in plasma.

Its subcellular location is the secreted. The protein is Protein AMBP of Pleuronectes platessa (European plaice).